The chain runs to 116 residues: G antigen 2D (116 aa).

Positions 1–116 are disordered; it reads MSWRGRSTYR…PEEGEKQSQC (116 aa). Acidic residues-rich tracts occupy residues 31–44 and 86–95; these read FSDE…EEGE and ECEDGPDGQE. Positions 102-116 are enriched in basic and acidic residues; that stretch reads EEVKTPEEGEKQSQC.

The protein belongs to the GAGE family. In terms of tissue distribution, not expressed in normal tissues, except in testis, but expressed by a large proportion of tumors of various histological origins.

This Homo sapiens (Human) protein is G antigen 2D (GAGE2D).